The following is a 480-amino-acid chain: Glutamyl-tRNA(Gln) amidotransferase subunit A (480 aa).

Active-site charge relay system residues include Lys70 and Ser145. Ser169 serves as the catalytic Acyl-ester intermediate.

Belongs to the amidase family. GatA subfamily. As to quaternary structure, heterotrimer of A, B and C subunits.

The enzyme catalyses L-glutamyl-tRNA(Gln) + L-glutamine + ATP + H2O = L-glutaminyl-tRNA(Gln) + L-glutamate + ADP + phosphate + H(+). Functionally, allows the formation of correctly charged Gln-tRNA(Gln) through the transamidation of misacylated Glu-tRNA(Gln) in organisms which lack glutaminyl-tRNA synthetase. The reaction takes place in the presence of glutamine and ATP through an activated gamma-phospho-Glu-tRNA(Gln). In Lactobacillus delbrueckii subsp. bulgaricus (strain ATCC 11842 / DSM 20081 / BCRC 10696 / JCM 1002 / NBRC 13953 / NCIMB 11778 / NCTC 12712 / WDCM 00102 / Lb 14), this protein is Glutamyl-tRNA(Gln) amidotransferase subunit A.